Reading from the N-terminus, the 240-residue chain is Probable transcriptional regulatory protein HPG27_148 (240 aa).

This sequence belongs to the TACO1 family.

Its subcellular location is the cytoplasm. This chain is Probable transcriptional regulatory protein HPG27_148, found in Helicobacter pylori (strain G27).